Reading from the N-terminus, the 477-residue chain is Ribulose bisphosphate carboxylase large chain (477 aa).

Positions 1–2 (MS) are excised as a propeptide. N-acetylproline is present on proline 3. Lysine 14 is modified (N6,N6,N6-trimethyllysine). 2 residues coordinate substrate: asparagine 123 and threonine 173. Lysine 175 acts as the Proton acceptor in catalysis. Lysine 177 is a binding site for substrate. 3 residues coordinate Mg(2+): lysine 201, aspartate 203, and glutamate 204. Lysine 201 carries the N6-carboxylysine modification. The active-site Proton acceptor is the histidine 294. Residues arginine 295, histidine 327, and serine 379 each coordinate substrate.

It belongs to the RuBisCO large chain family. Type I subfamily. As to quaternary structure, heterohexadecamer of 8 large chains and 8 small chains; disulfide-linked. The disulfide link is formed within the large subunit homodimers. Requires Mg(2+) as cofactor. In terms of processing, the disulfide bond which can form in the large chain dimeric partners within the hexadecamer appears to be associated with oxidative stress and protein turnover.

It localises to the plastid. The protein resides in the chloroplast. The enzyme catalyses 2 (2R)-3-phosphoglycerate + 2 H(+) = D-ribulose 1,5-bisphosphate + CO2 + H2O. It carries out the reaction D-ribulose 1,5-bisphosphate + O2 = 2-phosphoglycolate + (2R)-3-phosphoglycerate + 2 H(+). RuBisCO catalyzes two reactions: the carboxylation of D-ribulose 1,5-bisphosphate, the primary event in carbon dioxide fixation, as well as the oxidative fragmentation of the pentose substrate in the photorespiration process. Both reactions occur simultaneously and in competition at the same active site. The polypeptide is Ribulose bisphosphate carboxylase large chain (Nicotiana acuminata (Acuminate tobacco)).